Here is a 394-residue protein sequence, read N- to C-terminus: Lipoyl synthase, chloroplastic (394 aa).

A chloroplast-targeting transit peptide spans Met1–Arg36. Residues Cys127, Cys132, Cys138, Cys158, Cys162, Cys165, and Ser373 each contribute to the [4Fe-4S] cluster site. Residues Gly141–Arg362 enclose the Radical SAM core domain.

This sequence belongs to the radical SAM superfamily. Lipoyl synthase family. The cofactor is [4Fe-4S] cluster. As to expression, expressed in roots, leaves and flowers.

The protein resides in the plastid. It is found in the chloroplast. It carries out the reaction [[Fe-S] cluster scaffold protein carrying a second [4Fe-4S](2+) cluster] + N(6)-octanoyl-L-lysyl-[protein] + 2 oxidized [2Fe-2S]-[ferredoxin] + 2 S-adenosyl-L-methionine + 4 H(+) = [[Fe-S] cluster scaffold protein] + N(6)-[(R)-dihydrolipoyl]-L-lysyl-[protein] + 4 Fe(3+) + 2 hydrogen sulfide + 2 5'-deoxyadenosine + 2 L-methionine + 2 reduced [2Fe-2S]-[ferredoxin]. Its pathway is protein modification; protein lipoylation via endogenous pathway; protein N(6)-(lipoyl)lysine from octanoyl-[acyl-carrier-protein]: step 2/2. Functionally, catalyzes the radical-mediated insertion of two sulfur atoms into the C-6 and C-8 positions of the octanoyl moiety bound to the lipoyl domains of lipoate-dependent enzymes, thereby converting the octanoylated domains into lipoylated derivatives. Together with LIP2P and LIP2P2 is essential for de novo plastidial protein lipoylation during seed development. The protein is Lipoyl synthase, chloroplastic of Arabidopsis thaliana (Mouse-ear cress).